Reading from the N-terminus, the 194-residue chain is MPNWGGGAKCGACDKTVYHAEEIQCNGRSFHKTCFHCMACRKALDSTTVAAHESEIYCKVCYGRKYGPKGIGFGQGAGCLSTDTGEHLGLQFQQSPKPARAATTSNPSKFSAKFGESEKCPRCGKSVYAAEKVMGGGKPWHKTCFPCAICGKSLESTNVTDKDGELYCKVCYAKNFGPTGIGFGGLTHQVEKKE.

An interaction with TCAP region spans residues 1-5 (MPNWG). One can recognise an LIM zinc-binding 1 domain in the interval 10–61 (CGACDKTVYHAEEIQCNGRSFHKTCFHCMACRKALDSTTVAAHESEIYCKVC). The Nuclear localization signal signature appears at 64-69 (RKYGPK). The segment at 94–105 (QSPKPARAATTS) is interaction with CLF2. Phosphoserine is present on residues Ser-95, Ser-111, and Ser-153. The region spanning 120 to 171 (CPRCGKSVYAAEKVMGGGKPWHKTCFPCAICGKSLESTNVTDKDGELYCKVC) is the LIM zinc-binding 2 domain.

As to quaternary structure, self-associates. Oligomeric in the cytoplasm and monomeric in the nucleus. Homooligomers preferentially form along the actin cytoskeleton. Interacts with TCAP, ACTN2 and NRAP. Interacts with LDHD, SPTB, MYOD1, MYOG, MYF6. Interacts with GLRX3 (via C-terminus); GLRX3 and calcineurin compete for interaction with CSRP3. Interacts with CFL2; the stoichiometry influences F-actin depolymerization and possibly two molecules of CFL2 can interact with one molecule of CSRP3 resulting in the highest functional impact; the interaction is stronger with phosphorylated CFL2. In terms of processing, phosphorylated by PKC/PRKCA. High in striated muscle and adult heart.

The protein localises to the nucleus. It localises to the cytoplasm. Its subcellular location is the cytoskeleton. The protein resides in the myofibril. It is found in the sarcomere. The protein localises to the z line. In terms of biological role, positive regulator of myogenesis. Acts as a cofactor for myogenic bHLH transcription factors such as MYOD1, and probably MYOG and MYF6. Enhances the DNA-binding activity of the MYOD1:TCF3 isoform E47 complex and may promote formation of a functional MYOD1:TCF3 isoform E47:MEF2A complex involved in myogenesis. Plays a crucial and specific role in the organization of cytosolic structures in cardiomyocytes. Could play a role in mechanical stretch sensing. May be a scaffold protein that promotes the assembly of interacting proteins at Z-line structures. It is essential for calcineurin anchorage to the Z line. Required for stress-induced calcineurin-NFAT activation. The role in regulation of cytoskeleton dynamics by association with CFL2 is reported conflictingly. Proposed to contribute to the maintenance of muscle cell integrity through an actin-based mechanism. Can directly bind to actin filaments, cross-link actin filaments into bundles without polarity selectivity and protect them from dilution- and cofilin-mediated depolymerization; the function seems to involve its self-association. In vitro can inhibit PKC/PRKCA activity. Proposed to be involved in cardiac stress signaling by down-regulating excessive PKC/PRKCA signaling. The chain is Cysteine and glycine-rich protein 3 (Csrp3) from Rattus norvegicus (Rat).